The following is a 111-amino-acid chain: MSGDRPKRPLSAYMLWLNETREQIKKDNPGSKVTDIAKRGGELWRGLKDKTEWEQKAIKMKEEYNKAVKEYEANGGTDSGAPKKRKKAAAKPAKKAKKKESSEEEEEDESE.

The segment at residues 6–72 (PKRPLSAYML…EYNKAVKEYE (67 aa)) is a DNA-binding region (HMG box). Residue S11 is modified to Phosphoserine. The segment at 72–111 (EANGGTDSGAPKKRKKAAAKPAKKAKKKESSEEEEEDESE) is disordered. Residues 82–98 (PKKRKKAAAKPAKKAKK) show a composition bias toward basic residues. The segment covering 102-111 (SEEEEEDESE) has biased composition (acidic residues).

It belongs to the HMGB family.

It is found in the nucleus. Its subcellular location is the chromosome. This is High mobility group protein Z (HmgZ) from Drosophila melanogaster (Fruit fly).